Consider the following 179-residue polypeptide: Large ribosomal subunit protein uL6 (179 aa).

The protein belongs to the universal ribosomal protein uL6 family. Part of the 50S ribosomal subunit.

Its function is as follows. This protein binds to the 23S rRNA, and is important in its secondary structure. It is located near the subunit interface in the base of the L7/L12 stalk, and near the tRNA binding site of the peptidyltransferase center. In Clostridium acetobutylicum (strain ATCC 824 / DSM 792 / JCM 1419 / IAM 19013 / LMG 5710 / NBRC 13948 / NRRL B-527 / VKM B-1787 / 2291 / W), this protein is Large ribosomal subunit protein uL6.